Consider the following 289-residue polypeptide: ATP synthase gamma chain (289 aa).

It belongs to the ATPase gamma chain family. In terms of assembly, F-type ATPases have 2 components, CF(1) - the catalytic core - and CF(0) - the membrane proton channel. CF(1) has five subunits: alpha(3), beta(3), gamma(1), delta(1), epsilon(1). CF(0) has three main subunits: a, b and c.

It is found in the cell inner membrane. Its function is as follows. Produces ATP from ADP in the presence of a proton gradient across the membrane. The gamma chain is believed to be important in regulating ATPase activity and the flow of protons through the CF(0) complex. This Polynucleobacter necessarius subsp. necessarius (strain STIR1) protein is ATP synthase gamma chain.